The primary structure comprises 72 residues: Translation initiation factor IF-1 (72 aa).

Residues 1 to 72 (MAKEETIQMQ…TRARITFRTK (72 aa)) form the S1-like domain.

The protein belongs to the IF-1 family. In terms of assembly, component of the 30S ribosomal translation pre-initiation complex which assembles on the 30S ribosome in the order IF-2 and IF-3, IF-1 and N-formylmethionyl-tRNA(fMet); mRNA recruitment can occur at any time during PIC assembly.

It localises to the cytoplasm. One of the essential components for the initiation of protein synthesis. Stabilizes the binding of IF-2 and IF-3 on the 30S subunit to which N-formylmethionyl-tRNA(fMet) subsequently binds. Helps modulate mRNA selection, yielding the 30S pre-initiation complex (PIC). Upon addition of the 50S ribosomal subunit IF-1, IF-2 and IF-3 are released leaving the mature 70S translation initiation complex. The chain is Translation initiation factor IF-1 from Nitrosomonas eutropha (strain DSM 101675 / C91 / Nm57).